Here is a 169-residue protein sequence, read N- to C-terminus: Large ribosomal subunit protein uL10 (169 aa).

The protein belongs to the universal ribosomal protein uL10 family. In terms of assembly, part of the ribosomal stalk of the 50S ribosomal subunit. The N-terminus interacts with L11 and the large rRNA to form the base of the stalk. The C-terminus forms an elongated spine to which L12 dimers bind in a sequential fashion forming a multimeric L10(L12)X complex.

Functionally, forms part of the ribosomal stalk, playing a central role in the interaction of the ribosome with GTP-bound translation factors. In Rickettsia bellii (strain OSU 85-389), this protein is Large ribosomal subunit protein uL10.